Consider the following 335-residue polypeptide: Holliday junction branch migration complex subunit RuvB (335 aa).

The tract at residues 4–183 (ADNLNVTSII…FGIVQRLEFY (180 aa)) is large ATPase domain (RuvB-L). ATP contacts are provided by residues Arg23, Gly64, Lys67, Thr68, Thr69, 130-132 (EDY), Arg173, Tyr183, and Arg220. A Mg(2+)-binding site is contributed by Thr68. Residues 184–254 (PTKDLQNIIS…VAMNALNMLN (71 aa)) form a small ATPAse domain (RuvB-S) region. The interval 257–335 (TAGFNFMDRQ…HFSLKQSRDI (79 aa)) is head domain (RuvB-H). DNA contacts are provided by Arg293, Arg312, and Arg317.

Belongs to the RuvB family. In terms of assembly, homohexamer. Forms an RuvA(8)-RuvB(12)-Holliday junction (HJ) complex. HJ DNA is sandwiched between 2 RuvA tetramers; dsDNA enters through RuvA and exits via RuvB. An RuvB hexamer assembles on each DNA strand where it exits the tetramer. Each RuvB hexamer is contacted by two RuvA subunits (via domain III) on 2 adjacent RuvB subunits; this complex drives branch migration. In the full resolvosome a probable DNA-RuvA(4)-RuvB(12)-RuvC(2) complex forms which resolves the HJ.

The protein localises to the cytoplasm. It catalyses the reaction ATP + H2O = ADP + phosphate + H(+). Its function is as follows. The RuvA-RuvB-RuvC complex processes Holliday junction (HJ) DNA during genetic recombination and DNA repair, while the RuvA-RuvB complex plays an important role in the rescue of blocked DNA replication forks via replication fork reversal (RFR). RuvA specifically binds to HJ cruciform DNA, conferring on it an open structure. The RuvB hexamer acts as an ATP-dependent pump, pulling dsDNA into and through the RuvAB complex. RuvB forms 2 homohexamers on either side of HJ DNA bound by 1 or 2 RuvA tetramers; 4 subunits per hexamer contact DNA at a time. Coordinated motions by a converter formed by DNA-disengaged RuvB subunits stimulates ATP hydrolysis and nucleotide exchange. Immobilization of the converter enables RuvB to convert the ATP-contained energy into a lever motion, pulling 2 nucleotides of DNA out of the RuvA tetramer per ATP hydrolyzed, thus driving DNA branch migration. The RuvB motors rotate together with the DNA substrate, which together with the progressing nucleotide cycle form the mechanistic basis for DNA recombination by continuous HJ branch migration. Branch migration allows RuvC to scan DNA until it finds its consensus sequence, where it cleaves and resolves cruciform DNA. The protein is Holliday junction branch migration complex subunit RuvB of Baumannia cicadellinicola subsp. Homalodisca coagulata.